Reading from the N-terminus, the 185-residue chain is Pyridoxal 5'-phosphate synthase subunit PdxT (185 aa).

46–48 serves as a coordination point for L-glutamine; the sequence is GES. Cysteine 75 serves as the catalytic Nucleophile. L-glutamine contacts are provided by residues arginine 101 and 129–130; that span reads IR. Catalysis depends on charge relay system residues histidine 165 and glutamate 167.

Belongs to the glutaminase PdxT/SNO family. In the presence of PdxS, forms a dodecamer of heterodimers. Only shows activity in the heterodimer.

The catalysed reaction is aldehydo-D-ribose 5-phosphate + D-glyceraldehyde 3-phosphate + L-glutamine = pyridoxal 5'-phosphate + L-glutamate + phosphate + 3 H2O + H(+). It carries out the reaction L-glutamine + H2O = L-glutamate + NH4(+). The protein operates within cofactor biosynthesis; pyridoxal 5'-phosphate biosynthesis. Catalyzes the hydrolysis of glutamine to glutamate and ammonia as part of the biosynthesis of pyridoxal 5'-phosphate. The resulting ammonia molecule is channeled to the active site of PdxS. The chain is Pyridoxal 5'-phosphate synthase subunit PdxT from Staphylococcus epidermidis (strain ATCC 12228 / FDA PCI 1200).